Reading from the N-terminus, the 348-residue chain is Putative S-adenosyl-L-methionine-dependent methyltransferase Mb3432 (348 aa).

S-adenosyl-L-methionine contacts are provided by residues Asp171 and 200–201 (DL).

The protein belongs to the UPF0677 family.

In terms of biological role, exhibits S-adenosyl-L-methionine-dependent methyltransferase activity. The sequence is that of Putative S-adenosyl-L-methionine-dependent methyltransferase Mb3432 from Mycobacterium bovis (strain ATCC BAA-935 / AF2122/97).